We begin with the raw amino-acid sequence, 317 residues long: Melanocyte-stimulating hormone receptor (317 aa).

The Extracellular portion of the chain corresponds to 1–37; that stretch reads MPVQGSQRRLLGSLNSTPTATPRLGLAANQTGARCLE. N-linked (GlcNAc...) asparagine glycosylation is present at Asn29. The chain crosses the membrane as a helical span at residues 38–63; that stretch reads VSIPDGLFLSLGLVSLVENVLVVVAI. At 64-72 the chain is on the cytoplasmic side; sequence ARNRNLHSP. A helical membrane pass occupies residues 73–93; the sequence is MYCFICCLALSDLLVSGSNML. Residues 94–118 lie on the Extracellular side of the membrane; sequence ETAVFLLLEAGALAARAAVVQQLDN. Residues 119–140 form a helical membrane-spanning segment; it reads VIDVITCSSMLSSLCFLGAIAV. Residues 141–163 are Cytoplasmic-facing; it reads DRYISIFYALRYHSIVTLRRARR. A helical membrane pass occupies residues 164-183; that stretch reads VVAAIWVASVLFSTLFIAYC. Residues 184-191 are Extracellular-facing; it reads DHAAVLLC. Residues 192–211 form a helical membrane-spanning segment; that stretch reads LVVFFLAMLVLMAVLYVHML. Residues 212-240 are Cytoplasmic-facing; sequence ARACQHAQGIAQLHKRQRPAHQGVGLKGA. The chain crosses the membrane as a helical span at residues 241 to 266; it reads ATLTILLGIFFLCWGPFFLHLTLIVL. Residues 267 to 279 are Extracellular-facing; that stretch reads CPQHPTCSCIFKN. Residues 280-300 form a helical membrane-spanning segment; it reads FNLFLTLIICNAIIDPLIYAF. Residues 301–317 are Cytoplasmic-facing; the sequence is RSQELRRTLKKVLLCSW. Cys315 is lipidated: S-palmitoyl cysteine.

The protein belongs to the G-protein coupled receptor 1 family. Interacts with MGRN1, but does not undergo MGRN1-mediated ubiquitination; this interaction competes with GNAS-binding and thus inhibits agonist-induced cAMP production. Interacts with OPN3; the interaction results in a decrease in MC1R-mediated cAMP signaling and ultimately a decrease in melanin production in melanocytes.

It is found in the cell membrane. Functionally, receptor for MSH (alpha, beta and gamma) and ACTH. The activity of this receptor is mediated by G proteins which activate adenylate cyclase. Mediates melanogenesis, the production of eumelanin (black/brown) and phaeomelanin (red/yellow), via regulation of cAMP signaling in melanocytes. The polypeptide is Melanocyte-stimulating hormone receptor (MC1R) (Trachypithecus obscurus (Dusky leaf-monkey)).